The following is a 69-amino-acid chain: Large ribosomal subunit protein bL31 (69 aa).

4 residues coordinate Zn(2+): Cys-17, Cys-19, Cys-37, and Cys-40.

The protein belongs to the bacterial ribosomal protein bL31 family. Type A subfamily. As to quaternary structure, part of the 50S ribosomal subunit. Requires Zn(2+) as cofactor.

In terms of biological role, binds the 23S rRNA. The chain is Large ribosomal subunit protein bL31 from Clostridium novyi (strain NT).